Here is a 469-residue protein sequence, read N- to C-terminus: Dihydrolipoyl dehydrogenase (469 aa).

FAD-binding positions include E40–C48, K57, and A120. C48 and C53 are joined by a disulfide. NAD(+) is bound by residues G186–I190, E209, and A275–V278. FAD contacts are provided by D317 and A325. The active-site Proton acceptor is H450.

Belongs to the class-I pyridine nucleotide-disulfide oxidoreductase family. In terms of assembly, homodimer. FAD is required as a cofactor.

Its subcellular location is the cytoplasm. It carries out the reaction N(6)-[(R)-dihydrolipoyl]-L-lysyl-[protein] + NAD(+) = N(6)-[(R)-lipoyl]-L-lysyl-[protein] + NADH + H(+). Functionally, lipoamide dehydrogenase is a component of the alpha-ketoacid dehydrogenase complexes. In Chlorobaculum parvum (strain DSM 263 / NCIMB 8327) (Chlorobium vibrioforme subsp. thiosulfatophilum), this protein is Dihydrolipoyl dehydrogenase (lpd).